We begin with the raw amino-acid sequence, 286 residues long: MIAKIIDGKYVSEKIKQEIAKQVRKNMNSGKRAPGLAMILVGHNPISQIYVTNKKKACEQVGLISFLYTLPITATENEIFQLIETLNNDNRIDGILIQLPLPNKLNKINVLEHIAPDKDVDGFHPYNVGRLCQRSPTLRPCTSRGIITLLEWYNIDMFVLHAVVVGASNIVGRPMTMELLLAGCTVSVTHRFTQNLKIYIENADLLIVAVGQANFIPGSWIKQGAIVIDVGINRLNNGNIVGDVHFSSAYERAAYITPVPGGVGPMTVVTLIQNTLQAYDDHHLVR.

Residues 166 to 168 and Ile-232 each bind NADP(+); that span reads GAS.

It belongs to the tetrahydrofolate dehydrogenase/cyclohydrolase family. Homodimer.

The catalysed reaction is (6R)-5,10-methylene-5,6,7,8-tetrahydrofolate + NADP(+) = (6R)-5,10-methenyltetrahydrofolate + NADPH. It catalyses the reaction (6R)-5,10-methenyltetrahydrofolate + H2O = (6R)-10-formyltetrahydrofolate + H(+). It functions in the pathway one-carbon metabolism; tetrahydrofolate interconversion. Its function is as follows. Catalyzes the oxidation of 5,10-methylenetetrahydrofolate to 5,10-methenyltetrahydrofolate and then the hydrolysis of 5,10-methenyltetrahydrofolate to 10-formyltetrahydrofolate. This Blochmanniella pennsylvanica (strain BPEN) protein is Bifunctional protein FolD.